Consider the following 157-residue polypeptide: Crossover junction endodeoxyribonuclease RuvC (157 aa).

Active-site residues include Asp-7, Glu-66, and Asp-139. Residues Asp-7, Glu-66, and Asp-139 each contribute to the Mg(2+) site.

The protein belongs to the RuvC family. As to quaternary structure, homodimer which binds Holliday junction (HJ) DNA. The HJ becomes 2-fold symmetrical on binding to RuvC with unstacked arms; it has a different conformation from HJ DNA in complex with RuvA. In the full resolvosome a probable DNA-RuvA(4)-RuvB(12)-RuvC(2) complex forms which resolves the HJ. Requires Mg(2+) as cofactor.

It localises to the cytoplasm. It carries out the reaction Endonucleolytic cleavage at a junction such as a reciprocal single-stranded crossover between two homologous DNA duplexes (Holliday junction).. The RuvA-RuvB-RuvC complex processes Holliday junction (HJ) DNA during genetic recombination and DNA repair. Endonuclease that resolves HJ intermediates. Cleaves cruciform DNA by making single-stranded nicks across the HJ at symmetrical positions within the homologous arms, yielding a 5'-phosphate and a 3'-hydroxyl group; requires a central core of homology in the junction. The consensus cleavage sequence is 5'-(A/T)TT(C/G)-3'. Cleavage occurs on the 3'-side of the TT dinucleotide at the point of strand exchange. HJ branch migration catalyzed by RuvA-RuvB allows RuvC to scan DNA until it finds its consensus sequence, where it cleaves and resolves the cruciform DNA. This chain is Crossover junction endodeoxyribonuclease RuvC, found in Helicobacter pylori (strain ATCC 700392 / 26695) (Campylobacter pylori).